The sequence spans 385 residues: Methylthioribose-1-phosphate isomerase (385 aa).

The active-site Proton donor is Asp255.

It belongs to the eIF-2B alpha/beta/delta subunits family. MtnA subfamily.

The protein localises to the cytoplasm. It is found in the nucleus. The enzyme catalyses 5-(methylsulfanyl)-alpha-D-ribose 1-phosphate = 5-(methylsulfanyl)-D-ribulose 1-phosphate. It functions in the pathway amino-acid biosynthesis; L-methionine biosynthesis via salvage pathway; L-methionine from S-methyl-5-thio-alpha-D-ribose 1-phosphate: step 1/6. Catalyzes the interconversion of methylthioribose-1-phosphate (MTR-1-P) into methylthioribulose-1-phosphate (MTRu-1-P). This Aspergillus clavatus (strain ATCC 1007 / CBS 513.65 / DSM 816 / NCTC 3887 / NRRL 1 / QM 1276 / 107) protein is Methylthioribose-1-phosphate isomerase (mri1).